An 807-amino-acid polypeptide reads, in one-letter code: Glycerol-3-phosphate acyltransferase (807 aa).

The short motif at 308–313 (CHRSHM) is the HXXXXD motif element.

This sequence belongs to the GPAT/DAPAT family.

The protein resides in the cell inner membrane. It carries out the reaction sn-glycerol 3-phosphate + an acyl-CoA = a 1-acyl-sn-glycero-3-phosphate + CoA. It participates in phospholipid metabolism; CDP-diacylglycerol biosynthesis; CDP-diacylglycerol from sn-glycerol 3-phosphate: step 1/3. In Shewanella halifaxensis (strain HAW-EB4), this protein is Glycerol-3-phosphate acyltransferase.